The sequence spans 313 residues: Porphobilinogen deaminase (313 aa).

Cysteine 242 is subject to S-(dipyrrolylmethanemethyl)cysteine.

It belongs to the HMBS family. In terms of assembly, monomer. Dipyrromethane serves as cofactor.

The catalysed reaction is 4 porphobilinogen + H2O = hydroxymethylbilane + 4 NH4(+). It functions in the pathway porphyrin-containing compound metabolism; protoporphyrin-IX biosynthesis; coproporphyrinogen-III from 5-aminolevulinate: step 2/4. In terms of biological role, tetrapolymerization of the monopyrrole PBG into the hydroxymethylbilane pre-uroporphyrinogen in several discrete steps. This is Porphobilinogen deaminase from Escherichia coli (strain K12 / MC4100 / BW2952).